A 183-amino-acid polypeptide reads, in one-letter code: ATP synthase subunit delta (183 aa).

Belongs to the ATPase delta chain family. F-type ATPases have 2 components, F(1) - the catalytic core - and F(0) - the membrane proton channel. F(1) has five subunits: alpha(3), beta(3), gamma(1), delta(1), epsilon(1). F(0) has three main subunits: a(1), b(2) and c(10-14). The alpha and beta chains form an alternating ring which encloses part of the gamma chain. F(1) is attached to F(0) by a central stalk formed by the gamma and epsilon chains, while a peripheral stalk is formed by the delta and b chains.

It localises to the cell inner membrane. Functionally, f(1)F(0) ATP synthase produces ATP from ADP in the presence of a proton or sodium gradient. F-type ATPases consist of two structural domains, F(1) containing the extramembraneous catalytic core and F(0) containing the membrane proton channel, linked together by a central stalk and a peripheral stalk. During catalysis, ATP synthesis in the catalytic domain of F(1) is coupled via a rotary mechanism of the central stalk subunits to proton translocation. This protein is part of the stalk that links CF(0) to CF(1). It either transmits conformational changes from CF(0) to CF(1) or is implicated in proton conduction. This chain is ATP synthase subunit delta, found in Oleidesulfovibrio alaskensis (strain ATCC BAA-1058 / DSM 17464 / G20) (Desulfovibrio alaskensis).